The chain runs to 572 residues: Phosphoenolpyruvate-protein phosphotransferase (572 aa).

His-191 functions as the Tele-phosphohistidine intermediate in the catalytic mechanism. Arg-298 and Arg-334 together coordinate phosphoenolpyruvate. Mg(2+)-binding residues include Glu-433 and Asp-457. Phosphoenolpyruvate is bound by residues 456-457 (ND) and Arg-467. Cys-504 functions as the Proton donor in the catalytic mechanism.

The protein belongs to the PEP-utilizing enzyme family. As to quaternary structure, homodimer. It depends on Mg(2+) as a cofactor.

The protein resides in the cytoplasm. It carries out the reaction L-histidyl-[protein] + phosphoenolpyruvate = N(pros)-phospho-L-histidyl-[protein] + pyruvate. In terms of biological role, general (non sugar-specific) component of the phosphoenolpyruvate-dependent sugar phosphotransferase system (sugar PTS). This major carbohydrate active-transport system catalyzes the phosphorylation of incoming sugar substrates concomitantly with their translocation across the cell membrane. Enzyme I transfers the phosphoryl group from phosphoenolpyruvate (PEP) to the phosphoryl carrier protein (HPr). In Staphylococcus epidermidis (strain ATCC 35984 / DSM 28319 / BCRC 17069 / CCUG 31568 / BM 3577 / RP62A), this protein is Phosphoenolpyruvate-protein phosphotransferase (ptsI).